A 365-amino-acid polypeptide reads, in one-letter code: U1 snRNP-associated protein usp109 (365 aa).

RRM domains are found at residues 3 to 79 (TSLW…VVPE), 86 to 162 (YMLF…SVKS), and 189 to 259 (TAVY…WARP).

Component of the U1 snRNP complex.

Its subcellular location is the nucleus. In Schizosaccharomyces pombe (strain 972 / ATCC 24843) (Fission yeast), this protein is U1 snRNP-associated protein usp109 (usp109).